The following is a 776-amino-acid chain: 3-isopropylmalate dehydratase (776 aa).

Positions 357, 418, and 421 each coordinate [4Fe-4S] cluster. The span at 482–493 shows a compositional bias: basic and acidic residues; the sequence is SAPKVEVRHDTD. Disordered regions lie at residues 482 to 518 and 525 to 544; these read SAPK…SDVA and DIPV…SADA. Positions 527 to 538 are enriched in polar residues; sequence PVSNSSTQSPGS.

Belongs to the aconitase/IPM isomerase family. Monomer. Requires [4Fe-4S] cluster as cofactor.

The catalysed reaction is (2R,3S)-3-isopropylmalate = (2S)-2-isopropylmalate. It functions in the pathway amino-acid biosynthesis; L-leucine biosynthesis; L-leucine from 3-methyl-2-oxobutanoate: step 2/4. Its function is as follows. Catalyzes the isomerization between 2-isopropylmalate and 3-isopropylmalate, via the formation of 2-isopropylmaleate. This is 3-isopropylmalate dehydratase (LEU1) from Eremothecium gossypii (strain ATCC 10895 / CBS 109.51 / FGSC 9923 / NRRL Y-1056) (Yeast).